The sequence spans 21 residues: Large ribosomal subunit protein uL29 (21 aa).

This sequence belongs to the universal ribosomal protein uL29 family.

The sequence is that of Large ribosomal subunit protein uL29 (rpmC) from Brevundimonas diminuta (Pseudomonas diminuta).